Consider the following 134-residue polypeptide: Putative integral membrane protein YxzK (134 aa).

4 consecutive transmembrane segments (helical) span residues 3 to 23 (VIRI…GEAI), 35 to 55 (IVGL…VSII), 58 to 78 (GAGF…TGVI), and 89 to 109 (LMLL…AGFA).

Its subcellular location is the cell membrane. The sequence is that of Putative integral membrane protein YxzK (yxzK) from Bacillus subtilis (strain 168).